The chain runs to 602 residues: Mating pair stabilization protein TraN (602 aa).

A signal peptide spans 1–18; it reads MKRILPLILALVAGMAQA.

In terms of assembly, interacts with OmpA of recipient cells. Might form multimers. May interact with TraG. In terms of processing, has higher gel mobility under non-reducing conditions, suggesting it has disulfide bonds; a dsbA deletion mutant has considerably less TraN that is still localized in the outer membrane.

It is found in the cell outer membrane. Its function is as follows. Essential for F plasmid conjugative transfer. May interact with the recipient cell surface to stabilize mating pairs initiated by F-pili. May interact with TraG. Transfer requires OmpA and lipopolysaccharide (LPS), which are possibly receptors for TraN. In Escherichia coli (strain K12), this protein is Mating pair stabilization protein TraN (traN).